Consider the following 533-residue polypeptide: Probable bifunctional tRNA threonylcarbamoyladenosine biosynthesis protein (533 aa).

Residues 1 to 329 form a kae1 region; the sequence is MTRVLGIEGT…FRPDEVPVSW (329 aa). Fe cation-binding residues include histidine 113 and histidine 117. L-threonylcarbamoyladenylate contacts are provided by residues 134–138, aspartate 166, glycine 179, glutamate 183, and asparagine 262; that span reads NASGA. Fe cation is bound at residue aspartate 290. The 196-residue stretch at 338–533 folds into the Protein kinase domain; that stretch reads PVPTDERRQG…REIETRGRYQ (196 aa). Residues 345–352 and lysine 363 contribute to the ATP site; that span reads RQGAEAVV. Aspartate 452 acts as the Proton acceptor; for kinase activity in catalysis.

The protein in the N-terminal section; belongs to the KAE1 / TsaD family. This sequence in the C-terminal section; belongs to the protein kinase superfamily. Tyr protein kinase family. BUD32 subfamily. As to quaternary structure, component of the KEOPS complex that consists of Kae1, Bud32, Cgi121 and Pcc1; the whole complex dimerizes. It depends on Fe(2+) as a cofactor.

The protein localises to the cytoplasm. It catalyses the reaction L-seryl-[protein] + ATP = O-phospho-L-seryl-[protein] + ADP + H(+). The enzyme catalyses L-threonyl-[protein] + ATP = O-phospho-L-threonyl-[protein] + ADP + H(+). It carries out the reaction L-threonylcarbamoyladenylate + adenosine(37) in tRNA = N(6)-L-threonylcarbamoyladenosine(37) in tRNA + AMP + H(+). In terms of biological role, required for the formation of a threonylcarbamoyl group on adenosine at position 37 (t(6)A37) in tRNAs that read codons beginning with adenine. Is a component of the KEOPS complex that is probably involved in the transfer of the threonylcarbamoyl moiety of threonylcarbamoyl-AMP (TC-AMP) to the N6 group of A37. The Kae1 domain likely plays a direct catalytic role in this reaction. The Bud32 domain probably displays kinase activity that regulates Kae1 function. The chain is Probable bifunctional tRNA threonylcarbamoyladenosine biosynthesis protein from Natronomonas pharaonis (strain ATCC 35678 / DSM 2160 / CIP 103997 / JCM 8858 / NBRC 14720 / NCIMB 2260 / Gabara) (Halobacterium pharaonis).